Reading from the N-terminus, the 369-residue chain is MSKITLGNESIVGSLTPSNKKSYKVTNRIQEGKKPLYAVVFNFLDARFFDVFVTAGGNRITLYNCLGDGAISALQSYADEDKEESFYTVSWACGVNGNPYVAAGGVKGIIRVIDVNSETIHKSLVGHGDSVNEIRTQPLKPQLVITASKDESVRLWNVETGICILIFAGAGGHRYEVLSVDFHPSDIYRFASCGMDTTIKIWSMKEFWTYVEKSFTWTDDPSKFPTKFVQFPVFTASIHTNYVDCNRWFGDFILSKSVDNEILLWEPQLKENSPGEGASDVLLRYPVPMCDIWFIKFSCDLHLSSVAIGNQEGKVYVWDLKSCPPVLITKLSHNQSKSVIRQTAMSVDGSTILACCEDGTIWRWDVITK.

WD repeat units lie at residues 31–73 (EGKK…AISA), 81–123 (DKEE…IHKS), 126–166 (GHGD…CILI), 172–212 (GHRY…TYVE), 238–275 (IHTNYVDCNRWFGDFILSKSVDNEILLWEPQLKENSPG), 287–328 (VPMC…PVLI), and 335–368 (QSKSVIRQTAMSVDGSTILACCEDGTIWRWDVIT).

It belongs to the WD repeat ESC family. Interacts directly with MEA. These two proteins are probably indirectly associated with FIS2. In plants, PcG complexes are probably composed of a member of the EZ family (CLF or MEA), FIE, and a member of the VEFS family (FIS2, VRN2 or EMF2). Component of the plant homeodomain / polycomb repressive complex 2 (PHD-PRC2) large complex during prolonged cold, composed of core PRC2 components (VRN2, EZA1, FIE and MSI1), and three related PHD finger proteins (VIL1, VIL2 and VIN3) that mediates histone H3 trimethylation on 'Lys-27' (H3K27me3). Binds to ALP1. Expressed in cauline leaves, root and stems. In the male reproductive organ, it is expressed in the developing anther; and is abundant in microspore mother cells, in microsporocytes and in the tapetum, but is absent from vascular bundles, the connective tissue and the filament. It is also absent from pollen grains at subsequent developmental stages. In the developing female reproductive organs, it is highly expressed in all cells of the young ovules primordium before archesporial differentiation. Then, it is highly expressed in the ovule sporophytic tissue and the megaspore mother cell before meiosis, but is absent from placenta or the developing carpel. Then, it decreases.

It is found in the nucleus. In terms of biological role, polycomb group (PcG) protein. PcG proteins act by forming multiprotein complexes, which are required to maintain the transcriptionally repressive state of homeotic genes throughout development. PcG proteins are not required to initiate repression, but to maintain it during later stages of development. They probably act via the methylation of histones, rendering chromatin heritably changed in its expressibility. Required to prevent the proliferation of the central cell by repressing unknown target genes before fertilization. Probably also involved in floral repression mechanism established during early plant development. Regulates the anteroposterior organization of the endosperm. Interacts with the promoter and represses the transcription of genes such as PHE1, that are paternally active and maternally silenced. The protein is Polycomb group protein FERTILIZATION-INDEPENDENT ENDOSPERM (FIE) of Arabidopsis thaliana (Mouse-ear cress).